A 116-amino-acid polypeptide reads, in one-letter code: Host cell factor C1 regulator 1 (116 aa).

The tract at residues 1 to 22 (MILQQPLERGPPGRDPRATTGV) is disordered. The interval 54–57 (DHPY) is interaction with HCFC1. Residues 88-97 (IPEALRLLRL) carry the Nuclear export signal motif.

As to quaternary structure, interacts with HCFC1.

The protein resides in the cytoplasm. It is found in the nucleus. Regulates HCFC1 activity by modulating its subcellular localization. Overexpression of HCFC1R1 leads to accumulation of HCFC1 in the cytoplasm. HCFC1R1-mediated export may provide the pool of cytoplasmic HCFC1 required for import of virion-derived VP16 into the nucleus. This Rattus norvegicus (Rat) protein is Host cell factor C1 regulator 1 (Hcfc1r1).